Consider the following 1066-residue polypeptide: Phosphatidylinositol 4-kinase PIK1 (1066 aa).

The PIK helical domain occupies 1–133 (MHKASSSKKS…GFQVARRVLN (133 aa)). Residues Ser-10 and Ser-236 each carry the phosphoserine modification. Disordered stretches follow at residues 218–240 (KKTS…PIDL), 303–411 (DGKN…KKAN), and 564–624 (NENR…LGDM). Residues 342–356 (NNEDETGGETEEDAD) show a composition bias toward acidic residues. 2 stretches are compositionally biased toward polar residues: residues 374-411 (QPRT…KKAN) and 570-597 (STLT…NEGL). A Phosphoserine modification is found at Ser-384. Phosphothreonine is present on Thr-394. Ser-396 and Ser-592 each carry phosphoserine. The span at 598 to 609 (SSTSRSDSASTA) shows a compositional bias: low complexity. A PI3K/PI4K catalytic domain is found at 770–1049 (ATKKERIRKT…FLIGKSLGSI (280 aa)). The segment at 776 to 782 (IRKTSEY) is G-loop. Residues 915–923 (QVKDRHNGN) are catalytic loop. Residues 934–958 (HIDFGFMLSNSPGSVGFEAAPFKLT) are activation loop.

It belongs to the PI3/PI4-kinase family. Type III PI4K subfamily. As to quaternary structure, interacts with FRQ1.

Its subcellular location is the nucleus. It is found in the golgi apparatus. The protein localises to the trans-Golgi network. The enzyme catalyses a 1,2-diacyl-sn-glycero-3-phospho-(1D-myo-inositol) + ATP = a 1,2-diacyl-sn-glycero-3-phospho-(1D-myo-inositol 4-phosphate) + ADP + H(+). Acts on phosphatidylinositol (PI) in the first committed step in the production of the second messenger inositol 1,4,5,-trisphosphate. PIK1 is part of a nuclear phosphoinositide cycle and could control cytokinesis through the actin cytoskeleton. Involved in the response to mating pheromone. The sequence is that of Phosphatidylinositol 4-kinase PIK1 from Saccharomyces cerevisiae (strain ATCC 204508 / S288c) (Baker's yeast).